The sequence spans 475 residues: Putative poly(A) polymerase catalytic subunit (475 aa).

Belongs to the poxviridae poly(A) polymerase catalytic subunit family. Highly divergent.

It is found in the virion. It catalyses the reaction RNA(n) + ATP = RNA(n)-3'-adenine ribonucleotide + diphosphate. Its function is as follows. Polymerase that creates the 3'-poly(A) tail of mRNA's. The sequence is that of Putative poly(A) polymerase catalytic subunit from African swine fever virus (isolate Tick/South Africa/Pretoriuskop Pr4/1996) (ASFV).